The following is a 502-amino-acid chain: MVKIQPDEISSIIRQQIAQYSEEVKVVNVGTVFQVGDGIARIYGLEKVMAGELLEFEDGTIGIALNLETKNVGAVLMGDGLAIQEGSSVRATGKIAQIPVSESYLGRVVNSLALPIDGKGAINSSETRLIESLAPGIISRRSVHEPLQTGLVAVDAMIPIGRGQRELIIGDRQTGKTAIAVDTIINQKGKDVICVYVAIGQKASSIAQVVNSLEERGCLSYTIIVAATADTPATLQYLAPYTGATLAEYFMYKGRHTLVIYDDLSKQAQAYREMSLLLRRPPGREAFPGDVFYLHSRLLERAAKLSDQLGGGSMTALPIVETQEGDVSAYIPTNVISITDGQIFLSGDIFNSGIRPAINVGISVSRVGSAAQPKAMKKVAGKLKLELAQFAELEAFSQFASDLDQATQKQLSRGSRLRELLKQAQSSPLALEDQVSTIYAGINGYLDGIPVENVRAFLVELRQYLASSKPKYGQILRDTEAFTEEAESILKEALVELTGSKN.

170-177 contributes to the ATP binding site; it reads GDRQTGKT.

This sequence belongs to the ATPase alpha/beta chains family. F-type ATPases have 2 components, CF(1) - the catalytic core - and CF(0) - the membrane proton channel. CF(1) has five subunits: alpha(3), beta(3), gamma(1), delta(1), epsilon(1). CF(0) has four main subunits: a, b, b' and c.

The protein resides in the plastid. It localises to the chloroplast thylakoid membrane. The catalysed reaction is ATP + H2O + 4 H(+)(in) = ADP + phosphate + 5 H(+)(out). Produces ATP from ADP in the presence of a proton gradient across the membrane. The alpha chain is a regulatory subunit. The sequence is that of ATP synthase subunit alpha, chloroplastic from Tupiella akineta (Green alga).